Consider the following 351-residue polypeptide: Photosystem II D2 protein (351 aa).

A helical transmembrane segment spans residues 39-59 (CSYLALGGWLTGTTFVTSWYT). Histidine 116 contacts chlorophyll a. Residues 123–139 (GFCLRQFEIARLVGIRP) form a helical membrane-spanning segment. Residues glutamine 128 and asparagine 141 each coordinate pheophytin a. A helical membrane pass occupies residues 151–164 (VFVSVFLMYPLGQA). Histidine 196 is a chlorophyll a binding site. A helical membrane pass occupies residues 206-226 (GALLCAIHGATVQNTLFEDGD). A plastoquinone-binding residues include histidine 213 and phenylalanine 260. Histidine 213 serves as a coordination point for Fe cation. Histidine 267 contributes to the Fe cation binding site. Residues 277–293 (GLWTSAFGIVGLALNLR) form a helical membrane-spanning segment.

This sequence belongs to the reaction center PufL/M/PsbA/D family. PSII is composed of 1 copy each of membrane proteins PsbA, PsbB, PsbC, PsbD, PsbE, PsbF, PsbH, PsbI, PsbJ, PsbK, PsbL, PsbM, PsbT, PsbX, PsbY, PsbZ, Psb30/Ycf12, at least 3 peripheral proteins of the oxygen-evolving complex and a large number of cofactors. It forms dimeric complexes. The D1/D2 heterodimer binds P680, chlorophylls that are the primary electron donor of PSII, and subsequent electron acceptors. It shares a non-heme iron and each subunit binds pheophytin, quinone, additional chlorophylls, carotenoids and lipids. There is also a Cl(-1) ion associated with D1 and D2, which is required for oxygen evolution. The PSII complex binds additional chlorophylls, carotenoids and specific lipids. serves as cofactor.

It localises to the plastid. The protein localises to the chloroplast thylakoid membrane. The enzyme catalyses 2 a plastoquinone + 4 hnu + 2 H2O = 2 a plastoquinol + O2. Its function is as follows. Photosystem II (PSII) is a light-driven water:plastoquinone oxidoreductase that uses light energy to abstract electrons from H(2)O, generating O(2) and a proton gradient subsequently used for ATP formation. It consists of a core antenna complex that captures photons, and an electron transfer chain that converts photonic excitation into a charge separation. The D1/D2 (PsbA/PsbD) reaction center heterodimer binds P680, the primary electron donor of PSII as well as several subsequent electron acceptors. D2 is needed for assembly of a stable PSII complex. The protein is Photosystem II D2 protein of Gracilaria tenuistipitata var. liui (Red alga).